The primary structure comprises 98 residues: Small ribosomal subunit protein bS6 (98 aa).

Belongs to the bacterial ribosomal protein bS6 family.

In terms of biological role, binds together with bS18 to 16S ribosomal RNA. The protein is Small ribosomal subunit protein bS6 of Lactobacillus acidophilus (strain ATCC 700396 / NCK56 / N2 / NCFM).